A 738-amino-acid polypeptide reads, in one-letter code: ATP-dependent RNA helicase rok1 (738 aa).

2 disordered regions span residues 1 to 112 (MDAF…DEEV) and 145 to 176 (VASEEPKKKKKKRKQQEEEESKVPLTKKEQKK). Residues 17-29 (ATPSSAQSSTRLP) are compositionally biased toward polar residues. The span at 92 to 104 (SKEEKQEQERSGE) shows a compositional bias: basic and acidic residues. The Q motif motif lies at 190–218 (ELRSKYKISSRLAENIAEQGFTVPTEVQL). Positions 231–447 (KAGESVEPDL…KSTIKERKEA (217 aa)) constitute a Helicase ATP-binding domain. Residue 244-251 (APTGSGKT) participates in ATP binding. Positions 316 to 356 (VVEREDEDDDGDDSSSEDGDESSESEHEERPIAKKSKGKAP) are disordered. The segment covering 319–338 (REDEDDDGDDSSSEDGDESS) has biased composition (acidic residues). Residues 394–397 (DEAD) carry the DEAD box motif. One can recognise a Helicase C-terminal domain in the interval 487 to 655 (GLRQLLHPTA…SIQKWLLDAL (169 aa)). The disordered stretch occupies residues 663–738 (KKELKKHGVK…GNESWDGLEN (76 aa)). Residues 697 to 706 (GFERRIENKK) are compositionally biased toward basic and acidic residues.

It belongs to the DEAD box helicase family. DDX52/ROK1 subfamily. In terms of assembly, interacts with the U3 snoRNA and is associated with the 90S and 40S pre-ribosomes.

The protein localises to the nucleus. It localises to the nucleolus. It catalyses the reaction ATP + H2O = ADP + phosphate + H(+). ATP-dependent RNA helicase involved in 40S ribosomal subunit biogenesis. Required for the processing and cleavage of 35S pre-rRNA at sites A0, A1, and A2, leading to mature 18S rRNA. This Aspergillus clavatus (strain ATCC 1007 / CBS 513.65 / DSM 816 / NCTC 3887 / NRRL 1 / QM 1276 / 107) protein is ATP-dependent RNA helicase rok1 (rok1).